The following is a 300-amino-acid chain: MQFHSSSALITPFKKDLSVDEAAYEALIKRQIFQGMDACVPVGTTGESATLTHKEHMRCIEIAIETCKNTKTPSNSRMKVLAGVGSNATSESLSLAKFAQKIGADAILCVSPYYNRPTQQGLFEHYKTIAQSVEIPVMLYDVPSRTGVSIEVPTALKLFREIPNIKAIKEASGSLKRVTELHYHEKDFKIFSGEDSLNHSIMFSGGCGVISVTGNLMPNLISQMVNCALKLEYQQALEIQNKLFHLHQALFVETNPIPIKMAMHLAGLIENPSYRLPLVAPSKETIQLLEKTLQQYEVIA.

Position 45 (Thr-45) interacts with pyruvate. The active-site Proton donor/acceptor is Tyr-140. Lys-169 (schiff-base intermediate with substrate) is an active-site residue. Ile-210 is a pyruvate binding site.

The protein belongs to the DapA family. As to quaternary structure, homotetramer; dimer of dimers.

The protein localises to the cytoplasm. The catalysed reaction is L-aspartate 4-semialdehyde + pyruvate = (2S,4S)-4-hydroxy-2,3,4,5-tetrahydrodipicolinate + H2O + H(+). Its pathway is amino-acid biosynthesis; L-lysine biosynthesis via DAP pathway; (S)-tetrahydrodipicolinate from L-aspartate: step 3/4. In terms of biological role, catalyzes the condensation of (S)-aspartate-beta-semialdehyde [(S)-ASA] and pyruvate to 4-hydroxy-tetrahydrodipicolinate (HTPA). This is 4-hydroxy-tetrahydrodipicolinate synthase from Helicobacter pylori (strain P12).